A 605-amino-acid chain; its full sequence is Protein phosphatase 1D (605 aa).

Positions 1 to 101 (MAGLYSLGVS…CRRRSSVAFF (101 aa)) are interaction with CHEK1. A PPM-type phosphatase domain is found at 8-375 (GVSVFSDQGG…DNTSAIVICI (368 aa)). A disordered region spans residues 28 to 90 (VVEPEPTAEE…DAGASPAPSR (63 aa)). Phosphoserine occurs at positions 40 and 85. Mn(2+)-binding residues include Asp-105, Gly-106, Asp-314, and Asp-366. Residues 516 to 591 (STPGQMKAQE…RRLRGQKKIG (76 aa)) form a disordered region. Polar residues-rich tracts occupy residues 530–544 (PPTN…SNSG) and 555–577 (LSRS…NSVK). The segment covering 579 to 588 (TMRRRLRGQK) has biased composition (basic residues).

Belongs to the PP2C family. In terms of assembly, interacts with CHEK1 and CHEK2; dephosphorylates them. Interacts with MAPK14. The cofactor is Mg(2+). It depends on Mn(2+) as a cofactor. Expressed in fetal and adult brain. Also detected in fetal liver and skeletal muscle, but not in their adult counterparts.

The protein resides in the nucleus. It localises to the cytoplasm. Its subcellular location is the cytosol. The catalysed reaction is O-phospho-L-seryl-[protein] + H2O = L-seryl-[protein] + phosphate. It carries out the reaction O-phospho-L-threonyl-[protein] + H2O = L-threonyl-[protein] + phosphate. Its function is as follows. Involved in the negative regulation of p53 expression. Required for the relief of p53-dependent checkpoint mediated cell cycle arrest. Binds to and dephosphorylates 'Ser-15' of TP53 and 'Ser-345' of CHEK1 which contributes to the functional inactivation of these proteins. Mediates MAPK14 dephosphorylation and inactivation. Is also an important regulator of global heterochromatin silencing and critical in maintaining genome integrity. The polypeptide is Protein phosphatase 1D (PPM1D) (Homo sapiens (Human)).